A 333-amino-acid polypeptide reads, in one-letter code: Phosphate acyltransferase (333 aa).

Belongs to the PlsX family. Homodimer. Probably interacts with PlsY.

It localises to the cytoplasm. The catalysed reaction is a fatty acyl-[ACP] + phosphate = an acyl phosphate + holo-[ACP]. The protein operates within lipid metabolism; phospholipid metabolism. Functionally, catalyzes the reversible formation of acyl-phosphate (acyl-PO(4)) from acyl-[acyl-carrier-protein] (acyl-ACP). This enzyme utilizes acyl-ACP as fatty acyl donor, but not acyl-CoA. The chain is Phosphate acyltransferase from Thermosipho melanesiensis (strain DSM 12029 / CIP 104789 / BI429).